The sequence spans 442 residues: 5-methylthioadenosine/S-adenosylhomocysteine deaminase (442 aa).

Residues H70 and H72 each contribute to the Zn(2+) site. Positions 99 and 191 each coordinate substrate. H218 serves as a coordination point for Zn(2+). 2 residues coordinate substrate: E221 and D306. D306 lines the Zn(2+) pocket.

Belongs to the metallo-dependent hydrolases superfamily. MTA/SAH deaminase family. The cofactor is Zn(2+).

The enzyme catalyses S-adenosyl-L-homocysteine + H2O + H(+) = S-inosyl-L-homocysteine + NH4(+). It catalyses the reaction S-methyl-5'-thioadenosine + H2O + H(+) = S-methyl-5'-thioinosine + NH4(+). Catalyzes the deamination of 5-methylthioadenosine and S-adenosyl-L-homocysteine into 5-methylthioinosine and S-inosyl-L-homocysteine, respectively. Is also able to deaminate adenosine. The polypeptide is 5-methylthioadenosine/S-adenosylhomocysteine deaminase (Nitratidesulfovibrio vulgaris (strain ATCC 29579 / DSM 644 / CCUG 34227 / NCIMB 8303 / VKM B-1760 / Hildenborough) (Desulfovibrio vulgaris)).